A 120-amino-acid chain; its full sequence is NAD(P)H-quinone oxidoreductase subunit 3, chloroplastic (120 aa).

3 helical membrane-spanning segments follow: residues 9–29, 64–84, and 88–108; these read IFWA…FISG, MFAL…PWAM, and VLGV…IVGS.

It belongs to the complex I subunit 3 family. As to quaternary structure, NDH is composed of at least 16 different subunits, 5 of which are encoded in the nucleus.

Its subcellular location is the plastid. The protein localises to the chloroplast thylakoid membrane. It catalyses the reaction a plastoquinone + NADH + (n+1) H(+)(in) = a plastoquinol + NAD(+) + n H(+)(out). The catalysed reaction is a plastoquinone + NADPH + (n+1) H(+)(in) = a plastoquinol + NADP(+) + n H(+)(out). NDH shuttles electrons from NAD(P)H:plastoquinone, via FMN and iron-sulfur (Fe-S) centers, to quinones in the photosynthetic chain and possibly in a chloroplast respiratory chain. The immediate electron acceptor for the enzyme in this species is believed to be plastoquinone. Couples the redox reaction to proton translocation, and thus conserves the redox energy in a proton gradient. The protein is NAD(P)H-quinone oxidoreductase subunit 3, chloroplastic of Vitis vinifera (Grape).